Consider the following 258-residue polypeptide: Thiazole synthase (258 aa).

The active-site Schiff-base intermediate with DXP is the lysine 97. 1-deoxy-D-xylulose 5-phosphate is bound by residues glycine 158, 184–185 (AG), and 206–207 (NT).

This sequence belongs to the ThiG family. In terms of assembly, homotetramer. Forms heterodimers with either ThiH or ThiS.

The protein localises to the cytoplasm. It carries out the reaction [ThiS sulfur-carrier protein]-C-terminal-Gly-aminoethanethioate + 2-iminoacetate + 1-deoxy-D-xylulose 5-phosphate = [ThiS sulfur-carrier protein]-C-terminal Gly-Gly + 2-[(2R,5Z)-2-carboxy-4-methylthiazol-5(2H)-ylidene]ethyl phosphate + 2 H2O + H(+). It participates in cofactor biosynthesis; thiamine diphosphate biosynthesis. In terms of biological role, catalyzes the rearrangement of 1-deoxy-D-xylulose 5-phosphate (DXP) to produce the thiazole phosphate moiety of thiamine. Sulfur is provided by the thiocarboxylate moiety of the carrier protein ThiS. In vitro, sulfur can be provided by H(2)S. The chain is Thiazole synthase from Marinomonas sp. (strain MWYL1).